The following is a 548-amino-acid chain: Chaperonin GroEL (548 aa).

ATP-binding positions include 30 to 33, Lys51, 87 to 91, Gly415, 479 to 481, and Asp495; these read TLGP, DGTTT, and NAA.

This sequence belongs to the chaperonin (HSP60) family. Forms a cylinder of 14 subunits composed of two heptameric rings stacked back-to-back. Interacts with the co-chaperonin GroES.

Its subcellular location is the cytoplasm. The catalysed reaction is ATP + H2O + a folded polypeptide = ADP + phosphate + an unfolded polypeptide.. In terms of biological role, together with its co-chaperonin GroES, plays an essential role in assisting protein folding. The GroEL-GroES system forms a nano-cage that allows encapsulation of the non-native substrate proteins and provides a physical environment optimized to promote and accelerate protein folding. This Vibrio campbellii (strain ATCC BAA-1116) protein is Chaperonin GroEL.